A 504-amino-acid chain; its full sequence is ATP synthase subunit beta (504 aa).

The tract at residues 1–23 (MAKAATPKETAAAKKPAAPKKAA) is disordered. 182–189 (GGAGVGKT) contacts ATP.

This sequence belongs to the ATPase alpha/beta chains family. In terms of assembly, F-type ATPases have 2 components, CF(1) - the catalytic core - and CF(0) - the membrane proton channel. CF(1) has five subunits: alpha(3), beta(3), gamma(1), delta(1), epsilon(1). CF(0) has three main subunits: a(1), b(2) and c(9-12). The alpha and beta chains form an alternating ring which encloses part of the gamma chain. CF(1) is attached to CF(0) by a central stalk formed by the gamma and epsilon chains, while a peripheral stalk is formed by the delta and b chains.

Its subcellular location is the cell inner membrane. It catalyses the reaction ATP + H2O + 4 H(+)(in) = ADP + phosphate + 5 H(+)(out). Its function is as follows. Produces ATP from ADP in the presence of a proton gradient across the membrane. The catalytic sites are hosted primarily by the beta subunits. The protein is ATP synthase subunit beta of Rhizobium meliloti (strain 1021) (Ensifer meliloti).